A 150-amino-acid chain; its full sequence is SsrA-binding protein (150 aa).

Residues 129–150 (ETEKQRDWQREKSRIMKGGSKE) are disordered.

It belongs to the SmpB family.

The protein localises to the cytoplasm. Its function is as follows. Required for rescue of stalled ribosomes mediated by trans-translation. Binds to transfer-messenger RNA (tmRNA), required for stable association of tmRNA with ribosomes. tmRNA and SmpB together mimic tRNA shape, replacing the anticodon stem-loop with SmpB. tmRNA is encoded by the ssrA gene; the 2 termini fold to resemble tRNA(Ala) and it encodes a 'tag peptide', a short internal open reading frame. During trans-translation Ala-aminoacylated tmRNA acts like a tRNA, entering the A-site of stalled ribosomes, displacing the stalled mRNA. The ribosome then switches to translate the ORF on the tmRNA; the nascent peptide is terminated with the 'tag peptide' encoded by the tmRNA and targeted for degradation. The ribosome is freed to recommence translation, which seems to be the essential function of trans-translation. This chain is SsrA-binding protein, found in Cupriavidus pinatubonensis (strain JMP 134 / LMG 1197) (Cupriavidus necator (strain JMP 134)).